The following is a 464-amino-acid chain: tRNA modification GTPase MnmE (464 aa).

The (6S)-5-formyl-5,6,7,8-tetrahydrofolate site is built by arginine 29, glutamate 91, and arginine 131. In terms of domain architecture, TrmE-type G spans 226–387; that stretch reads GLKVALTGKP…LINYLLKKCG (162 aa). Asparagine 236 contributes to the K(+) binding site. GTP contacts are provided by residues 236-241, 255-261, and 280-283; these read NVGKSS, TDLPGTT, and DTAG. Mg(2+) is bound at residue serine 240. 3 residues coordinate K(+): threonine 255, leucine 257, and threonine 260. Threonine 261 contacts Mg(2+). Lysine 464 serves as a coordination point for (6S)-5-formyl-5,6,7,8-tetrahydrofolate.

It belongs to the TRAFAC class TrmE-Era-EngA-EngB-Septin-like GTPase superfamily. TrmE GTPase family. In terms of assembly, homodimer. Heterotetramer of two MnmE and two MnmG subunits. It depends on K(+) as a cofactor.

It localises to the cytoplasm. In terms of biological role, exhibits a very high intrinsic GTPase hydrolysis rate. Involved in the addition of a carboxymethylaminomethyl (cmnm) group at the wobble position (U34) of certain tRNAs, forming tRNA-cmnm(5)s(2)U34. The chain is tRNA modification GTPase MnmE from Prochlorococcus marinus (strain NATL2A).